The chain runs to 341 residues: Short chain dehydrogenase FGM9 (341 aa).

L38, K63, D88, and N114 together coordinate NADP(+). Residues S167 and Y200 each act as proton donor in the active site. NADP(+) is bound by residues Y200 and K204. K204 acts as the Lowers pKa of active site Tyr in catalysis.

It belongs to the short-chain dehydrogenases/reductases (SDR) family.

The protein operates within secondary metabolite biosynthesis. Functionally, short chain dehydrogenase; part of the Fg3_54/C64 gene cluster that mediates the biosynthesis of the octapeptide fusaoctaxin A, a virulence factor that is required for cell-to-cell invasiveness of plant host. The 2 nonribosomal peptide synthetases NRPS9 and NRPS5 form an assembly line which likely utilizes GABA as a starter unit (loaded on the unique module M1 of NRPS9) and sequentially incorporates seven extender units composed of the residues L-Ala, L-allo-Ile, L-Ser, L-Val, L-Ser, L-Leu and L-Leu, respectively. During the process, each of the residues that are tethered on modules M3-M7 of NRPS5 containing an E domain can undergo an epimerization reaction to produce a D-configuration before the transpeptidation reaction occurs. The elongation of the peptidyl chain might be terminated by module M8-mediated L-Leu incorporation, followed by R domain-catalyzed 4 electron reduction to release the resulting octapeptide from the assembly line as an alcohol. Fusaoctaxin A is cleaved by the cluster specific ABC transporter FGM5 to the pentapeptide fusapentaxin A and the tripeptide fusatrixin A. The other enzymes from the cluster, FGM1, FGM2, FGM3 and FGM9 seem not to be involved in the biosynthesis of fusaoctaxin A and their functions have still to be determined. In Gibberella zeae (strain ATCC MYA-4620 / CBS 123657 / FGSC 9075 / NRRL 31084 / PH-1) (Wheat head blight fungus), this protein is Short chain dehydrogenase FGM9.